A 66-amino-acid polypeptide reads, in one-letter code: Beta-mammal toxin Cv3 (66 aa).

The region spanning 1–66 is the LCN-type CS-alpha/beta domain; the sequence is KEGYIVNYYD…VWPLPNKTCN (66 aa). 4 disulfide bridges follow: Cys12/Cys65, Cys16/Cys41, Cys25/Cys46, and Cys29/Cys48.

As to expression, expressed by the venom gland.

The protein localises to the secreted. Its function is as follows. Beta toxins bind voltage-independently at site-4 of sodium channels (Nav) and reduces peak current and shifts the voltage of activation toward more negative potentials thereby affecting sodium channel activation and promoting spontaneous and repetitive firing. This toxin is strongly toxic to mice. This is Beta-mammal toxin Cv3 from Centruroides villegasi (Scorpion).